Consider the following 714-residue polypeptide: Fatty acid oxidation complex subunit alpha (714 aa).

Residues 1–190 (MEMASVFTLN…KLGLVDDVVP (190 aa)) form an enoyl-CoA hydratase region. The 3-hydroxyacyl-CoA dehydrogenase stretch occupies residues 306–714 (APLNSVGILG…FWKTTATDLQ (409 aa)).

In the N-terminal section; belongs to the enoyl-CoA hydratase/isomerase family. This sequence in the central section; belongs to the 3-hydroxyacyl-CoA dehydrogenase family. In terms of assembly, heterotetramer of two alpha chains (FadJ) and two beta chains (FadI).

It is found in the cytoplasm. It carries out the reaction a (3S)-3-hydroxyacyl-CoA = a (2E)-enoyl-CoA + H2O. The enzyme catalyses a 4-saturated-(3S)-3-hydroxyacyl-CoA = a (3E)-enoyl-CoA + H2O. The catalysed reaction is a (3S)-3-hydroxyacyl-CoA + NAD(+) = a 3-oxoacyl-CoA + NADH + H(+). It catalyses the reaction (3S)-3-hydroxybutanoyl-CoA = (3R)-3-hydroxybutanoyl-CoA. It participates in lipid metabolism; fatty acid beta-oxidation. In terms of biological role, catalyzes the formation of a hydroxyacyl-CoA by addition of water on enoyl-CoA. Also exhibits 3-hydroxyacyl-CoA epimerase and 3-hydroxyacyl-CoA dehydrogenase activities. This chain is Fatty acid oxidation complex subunit alpha, found in Escherichia coli O139:H28 (strain E24377A / ETEC).